The sequence spans 311 residues: Ribonuclease HIII (311 aa).

One can recognise an RNase H type-2 domain in the interval 95–311; it reads MSIVGSDEVG…NTEKALRLLR (217 aa). A divalent metal cation is bound by residues Asp-101, Glu-102, and Asp-206.

The protein belongs to the RNase HII family. RnhC subfamily. Requires Mn(2+) as cofactor. Mg(2+) serves as cofactor.

It localises to the cytoplasm. The catalysed reaction is Endonucleolytic cleavage to 5'-phosphomonoester.. Its function is as follows. Endonuclease that specifically degrades the RNA of RNA-DNA hybrids. This chain is Ribonuclease HIII, found in Bacillus cereus (strain ATCC 14579 / DSM 31 / CCUG 7414 / JCM 2152 / NBRC 15305 / NCIMB 9373 / NCTC 2599 / NRRL B-3711).